The following is a 146-amino-acid chain: uncharacterized protein (146 aa).

The chain crosses the membrane as a helical span at residues 7–24; the sequence is VIALFLVTGLTLYAIRLL.

It is found in the membrane. This is an uncharacterized protein from Haemophilus influenzae (strain ATCC 51907 / DSM 11121 / KW20 / Rd).